Here is a 374-residue protein sequence, read N- to C-terminus: Aminodeoxychorismate lyase (374 aa).

This sequence belongs to the class-IV pyridoxal-phosphate-dependent aminotransferase family. In terms of assembly, homodimer. The cofactor is pyridoxal 5'-phosphate.

It is found in the cytoplasm. It catalyses the reaction 4-amino-4-deoxychorismate = 4-aminobenzoate + pyruvate + H(+). It functions in the pathway cofactor biosynthesis; tetrahydrofolate biosynthesis; 4-aminobenzoate from chorismate: step 2/2. Its function is as follows. Converts 4-amino-4-deoxychorismate into 4-aminobenzoate (PABA) and pyruvate. This is Aminodeoxychorismate lyase (ABZ2) from Saccharomyces cerevisiae (strain ATCC 204508 / S288c) (Baker's yeast).